The following is a 400-amino-acid chain: Argininosuccinate synthase (400 aa).

Residue A9–S17 participates in ATP binding. Y87 serves as a coordination point for L-citrulline. Position 117 (G117) interacts with ATP. L-aspartate-binding residues include T119, N123, and D124. An L-citrulline-binding site is contributed by N123. 5 residues coordinate L-citrulline: R127, S176, S185, E261, and Y273.

The protein belongs to the argininosuccinate synthase family. Type 1 subfamily. Homotetramer.

The protein localises to the cytoplasm. It catalyses the reaction L-citrulline + L-aspartate + ATP = 2-(N(omega)-L-arginino)succinate + AMP + diphosphate + H(+). Its pathway is amino-acid biosynthesis; L-arginine biosynthesis; L-arginine from L-ornithine and carbamoyl phosphate: step 2/3. This is Argininosuccinate synthase from Chlorobium phaeobacteroides (strain DSM 266 / SMG 266 / 2430).